The following is a 623-amino-acid chain: Leucine aminopeptidase 2 (623 aa).

The tract at residues 1–23 (MRRCTKNSRSTNPPRDPNTLSNY) is disordered. Residues 7-23 (NSRSTNPPRDPNTLSNY) show a composition bias toward polar residues. Residues 145–147 (QCQ) and 277–282 (PYGGME) contribute to the a peptide site. A Zn(2+)-binding site is contributed by His306. Catalysis depends on Glu307, which acts as the Proton acceptor. The Zn(2+) site is built by His310 and Glu329. The active-site Proton donor is the Tyr394.

Belongs to the peptidase M1 family. Requires Zn(2+) as cofactor.

Its subcellular location is the cytoplasm. The protein resides in the nucleus. It carries out the reaction an epoxide + H2O = an ethanediol. In terms of biological role, aminopeptidase that preferentially cleaves di- and tripeptides. Also has low epoxide hydrolase activity (in vitro). Can hydrolyze the epoxide leukotriene LTA(4) but it forms preferentially 5,6-dihydroxy-7,9,11,14-eicosatetraenoic acid rather than the cytokine leukotriene B(4) as the product compared to the homologous mammalian enzyme (in vitro). The protein is Leucine aminopeptidase 2 of Ajellomyces capsulatus (strain NAm1 / WU24) (Darling's disease fungus).